A 100-amino-acid polypeptide reads, in one-letter code: Large ribosomal subunit protein bL21 (100 aa).

Belongs to the bacterial ribosomal protein bL21 family. As to quaternary structure, part of the 50S ribosomal subunit. Contacts protein L20.

Functionally, this protein binds to 23S rRNA in the presence of protein L20. The protein is Large ribosomal subunit protein bL21 of Corynebacterium kroppenstedtii (strain DSM 44385 / JCM 11950 / CIP 105744 / CCUG 35717).